Reading from the N-terminus, the 858-residue chain is Bifunctional uridylyltransferase/uridylyl-removing enzyme (858 aa).

Residues 1 to 324 (MSASVAEPPP…PATSGVTRVL (324 aa)) form a uridylyltransferase region. The interval 325–681 (SPGRFVEKQG…ARPSPVGDAL (357 aa)) is uridylyl-removing. One can recognise an HD domain in the interval 443–565 (VDQHILMVLR…VGSERRLTAL (123 aa)). ACT domains lie at 682–761 (QVLV…PEPS) and 790–858 (ILSV…AIAV).

The protein belongs to the GlnD family. Requires Mg(2+) as cofactor.

The enzyme catalyses [protein-PII]-L-tyrosine + UTP = [protein-PII]-uridylyl-L-tyrosine + diphosphate. It catalyses the reaction [protein-PII]-uridylyl-L-tyrosine + H2O = [protein-PII]-L-tyrosine + UMP + H(+). Uridylyltransferase (UTase) activity is inhibited by glutamine, while glutamine activates uridylyl-removing (UR) activity. Modifies, by uridylylation and deuridylylation, the PII regulatory proteins (GlnB and homologs), in response to the nitrogen status of the cell that GlnD senses through the glutamine level. Under low glutamine levels, catalyzes the conversion of the PII proteins and UTP to PII-UMP and PPi, while under higher glutamine levels, GlnD hydrolyzes PII-UMP to PII and UMP (deuridylylation). Thus, controls uridylylation state and activity of the PII proteins, and plays an important role in the regulation of nitrogen assimilation and metabolism. The sequence is that of Bifunctional uridylyltransferase/uridylyl-removing enzyme from Burkholderia mallei (strain NCTC 10247).